Reading from the N-terminus, the 77-residue chain is NADH dehydrogenase [ubiquinone] 1 alpha subcomplex subunit 3 (77 aa).

Residues I23 to Y45 form a helical membrane-spanning segment.

This sequence belongs to the complex I NDUFA3 subunit family. As to quaternary structure, complex I is composed of 43 different subunits.

It localises to the mitochondrion inner membrane. The protein localises to the cytoplasm. Its subcellular location is the myofibril. The protein resides in the sarcomere. It is found in the z line. Accessory subunit of the mitochondrial membrane respiratory chain NADH dehydrogenase (Complex I), that is believed not to be involved in catalysis. Complex I functions in the transfer of electrons from NADH to the respiratory chain. The immediate electron acceptor for the enzyme is believed to be ubiquinone. Required for the maintenance of muscle integrity and for cell proliferation in the wing imaginal disc epithelium, possibly by interacting with the chaperone-assisted selective autophagy (CASA) pathway. The polypeptide is NADH dehydrogenase [ubiquinone] 1 alpha subcomplex subunit 3 (Drosophila melanogaster (Fruit fly)).